A 166-amino-acid polypeptide reads, in one-letter code: Thiol peroxidase (166 aa).

The Thioredoxin domain occupies V18–A164. The active-site Cysteine sulfenic acid (-SOH) intermediate is C60. C60 and C94 are oxidised to a cystine.

Belongs to the peroxiredoxin family. Tpx subfamily. Homodimer.

It carries out the reaction a hydroperoxide + [thioredoxin]-dithiol = an alcohol + [thioredoxin]-disulfide + H2O. Thiol-specific peroxidase that catalyzes the reduction of hydrogen peroxide and organic hydroperoxides to water and alcohols, respectively. Plays a role in cell protection against oxidative stress by detoxifying peroxides. The chain is Thiol peroxidase from Halalkalibacterium halodurans (strain ATCC BAA-125 / DSM 18197 / FERM 7344 / JCM 9153 / C-125) (Bacillus halodurans).